We begin with the raw amino-acid sequence, 866 residues long: Leucine--tRNA ligase (866 aa).

The 'HIGH' region signature appears at 42–52 (PYPSGKLHMGH). The 'KMSKS' region motif lies at 624–628 (TMSKS). Lysine 627 is a binding site for ATP.

Belongs to the class-I aminoacyl-tRNA synthetase family.

The protein resides in the cytoplasm. The catalysed reaction is tRNA(Leu) + L-leucine + ATP = L-leucyl-tRNA(Leu) + AMP + diphosphate. The polypeptide is Leucine--tRNA ligase (Nitrosospira multiformis (strain ATCC 25196 / NCIMB 11849 / C 71)).